The chain runs to 487 residues: Cytochrome P450 716A75 (487 aa).

A helical membrane pass occupies residues 5-25 (FVSLLSLFLLILLPLSLLFLF). C434 contributes to the heme binding site.

Belongs to the cytochrome P450 family. Heme serves as cofactor.

The protein resides in the membrane. It catalyses the reaction beta-amyrin + reduced [NADPH--hemoprotein reductase] + O2 = erythrodiol + oxidized [NADPH--hemoprotein reductase] + H2O + H(+). The catalysed reaction is erythrodiol + reduced [NADPH--hemoprotein reductase] + O2 = oleanolic aldehyde + oxidized [NADPH--hemoprotein reductase] + 2 H2O + H(+). It carries out the reaction oleanolic aldehyde + reduced [NADPH--hemoprotein reductase] + O2 = oleanolate + oxidized [NADPH--hemoprotein reductase] + H2O + 2 H(+). In terms of biological role, catalyzes the C-28 oxidation of beta-amyrin to form erythrodiol. Catalyzes the C-28 oxidation of erythrodiol to form oleanolic aldehyde. Catalyzes the C-28 oxidation of oleanolic aldehyde to form oleanolate. The protein is Cytochrome P450 716A75 of Maesa lanceolata (False assegai).